A 379-amino-acid polypeptide reads, in one-letter code: 3-dehydroquinate synthase (379 aa).

NAD(+) is bound by residues 67-72, 101-105, 125-126, Lys-138, and Lys-147; these read SGEKNK, GVVLD, and TT. Zn(2+)-binding residues include Glu-180, His-242, and His-258.

It belongs to the sugar phosphate cyclases superfamily. Dehydroquinate synthase family. The cofactor is NAD(+). Co(2+) serves as cofactor. Zn(2+) is required as a cofactor.

It localises to the cytoplasm. The enzyme catalyses 7-phospho-2-dehydro-3-deoxy-D-arabino-heptonate = 3-dehydroquinate + phosphate. Its pathway is metabolic intermediate biosynthesis; chorismate biosynthesis; chorismate from D-erythrose 4-phosphate and phosphoenolpyruvate: step 2/7. Catalyzes the conversion of 3-deoxy-D-arabino-heptulosonate 7-phosphate (DAHP) to dehydroquinate (DHQ). The polypeptide is 3-dehydroquinate synthase (Chlamydia abortus (strain DSM 27085 / S26/3) (Chlamydophila abortus)).